The following is a 529-amino-acid chain: hal-like protein DDB_G0273787/DDB_G0273081 (529 aa).

The 5-imidazolinone (Ala-Gly) cross-link spans 151–153; the sequence is ASG. 2,3-didehydroalanine (Ser) is present on S152.

This sequence belongs to the PAL/histidase family. Contains an active site 4-methylidene-imidazol-5-one (MIO), which is formed autocatalytically by cyclization and dehydration of residues Ala-Ser-Gly.

It localises to the cytoplasm. The enzyme catalyses L-histidine = trans-urocanate + NH4(+). It functions in the pathway amino-acid degradation; L-histidine degradation into L-glutamate; N-formimidoyl-L-glutamate from L-histidine: step 1/3. The chain is hal-like protein DDB_G0273787/DDB_G0273081 from Dictyostelium discoideum (Social amoeba).